Reading from the N-terminus, the 305-residue chain is DNA-directed RNA polymerase 35 kDa subunit (305 aa).

Belongs to the poxviridae DNA-directed RNA polymerase 35 kDa subunit family. In terms of assembly, the DNA-dependent RNA polymerase used for intermediate and late genes expression consists of eight subunits 147 kDa, 133 kDa, 35 kDa, 30 kDa, 22 kDa, 19 kDa, 18 kDa and 7 kDa totalling more than 500 kDa in mass. The same holoenzyme, with the addition of the transcription-specificity factor RAP94, is used for early gene expression.

Its subcellular location is the virion. The enzyme catalyses RNA(n) + a ribonucleoside 5'-triphosphate = RNA(n+1) + diphosphate. In terms of biological role, part of the DNA-dependent RNA polymerase which catalyzes the transcription of viral DNA into RNA using the four ribonucleoside triphosphates as substrates. Responsible for the transcription of early, intermediate and late genes. DNA-dependent RNA polymerase associates with the early transcription factor (ETF), itself composed of D6 and A7, thereby allowing the early genes transcription. Late transcription, and probably also intermediate transcription, require newly synthesized RNA polymerase. The polypeptide is DNA-directed RNA polymerase 35 kDa subunit (OPG156) (Homo sapiens (Human)).